Reading from the N-terminus, the 452-residue chain is tRNA-2-methylthio-N(6)-dimethylallyladenosine synthase (452 aa).

The MTTase N-terminal domain maps to 5–121; that stretch reads RRYHITTFGC…LADLLAQVEA (117 aa). [4Fe-4S] cluster-binding residues include cysteine 14, cysteine 50, cysteine 84, cysteine 156, cysteine 160, and cysteine 163. The 238-residue stretch at 142–379 folds into the Radical SAM core domain; that stretch reads RDSTITAWVN…NHLVAQMAAD (238 aa). Positions 382–446 constitute a TRAM domain; sequence QRYLGRTEEV…AFSLTGQILS (65 aa).

The protein belongs to the methylthiotransferase family. MiaB subfamily. As to quaternary structure, monomer. It depends on [4Fe-4S] cluster as a cofactor.

It is found in the cytoplasm. The enzyme catalyses N(6)-dimethylallyladenosine(37) in tRNA + (sulfur carrier)-SH + AH2 + 2 S-adenosyl-L-methionine = 2-methylsulfanyl-N(6)-dimethylallyladenosine(37) in tRNA + (sulfur carrier)-H + 5'-deoxyadenosine + L-methionine + A + S-adenosyl-L-homocysteine + 2 H(+). Catalyzes the methylthiolation of N6-(dimethylallyl)adenosine (i(6)A), leading to the formation of 2-methylthio-N6-(dimethylallyl)adenosine (ms(2)i(6)A) at position 37 in tRNAs that read codons beginning with uridine. This is tRNA-2-methylthio-N(6)-dimethylallyladenosine synthase from Synechococcus elongatus (strain ATCC 33912 / PCC 7942 / FACHB-805) (Anacystis nidulans R2).